Consider the following 318-residue polypeptide: Pantothenate kinase (318 aa).

96–103 is an ATP binding site; that stretch reads GSVAVGKS.

The protein belongs to the prokaryotic pantothenate kinase family.

It localises to the cytoplasm. It carries out the reaction (R)-pantothenate + ATP = (R)-4'-phosphopantothenate + ADP + H(+). Its pathway is cofactor biosynthesis; coenzyme A biosynthesis; CoA from (R)-pantothenate: step 1/5. The sequence is that of Pantothenate kinase from Afipia carboxidovorans (strain ATCC 49405 / DSM 1227 / KCTC 32145 / OM5) (Oligotropha carboxidovorans).